Here is a 227-residue protein sequence, read N- to C-terminus: Cytochrome c oxidase subunit 2 (227 aa).

Over 1 to 14 the chain is Mitochondrial intermembrane; the sequence is MAYPFQLGLQDATS. The helical transmembrane segment at 15-45 threads the bilayer; that stretch reads PIMEELTSFHDHTLMIVFLISSLVLYIILLM. The Mitochondrial matrix portion of the chain corresponds to 46 to 59; sequence LTTKLTHTSTMDAQ. Residues 60-87 form a helical membrane-spanning segment; sequence EVETIWTILPAVILILIALPSLRILYMM. The Mitochondrial intermembrane portion of the chain corresponds to 88 to 227; sequence DEINNPALTV…HFENWSASMI (140 aa). 6 residues coordinate Cu cation: His-161, Cys-196, Glu-198, Cys-200, His-204, and Met-207. Residue Glu-198 participates in Mg(2+) binding.

This sequence belongs to the cytochrome c oxidase subunit 2 family. In terms of assembly, component of the cytochrome c oxidase (complex IV, CIV), a multisubunit enzyme composed of 14 subunits. The complex is composed of a catalytic core of 3 subunits MT-CO1, MT-CO2 and MT-CO3, encoded in the mitochondrial DNA, and 11 supernumerary subunits COX4I, COX5A, COX5B, COX6A, COX6B, COX6C, COX7A, COX7B, COX7C, COX8 and NDUFA4, which are encoded in the nuclear genome. The complex exists as a monomer or a dimer and forms supercomplexes (SCs) in the inner mitochondrial membrane with NADH-ubiquinone oxidoreductase (complex I, CI) and ubiquinol-cytochrome c oxidoreductase (cytochrome b-c1 complex, complex III, CIII), resulting in different assemblies (supercomplex SCI(1)III(2)IV(1) and megacomplex MCI(2)III(2)IV(2)). Found in a complex with TMEM177, COA6, COX18, COX20, SCO1 and SCO2. Interacts with TMEM177 in a COX20-dependent manner. Interacts with COX20. Interacts with COX16. The cofactor is Cu cation.

The protein localises to the mitochondrion inner membrane. The catalysed reaction is 4 Fe(II)-[cytochrome c] + O2 + 8 H(+)(in) = 4 Fe(III)-[cytochrome c] + 2 H2O + 4 H(+)(out). Functionally, component of the cytochrome c oxidase, the last enzyme in the mitochondrial electron transport chain which drives oxidative phosphorylation. The respiratory chain contains 3 multisubunit complexes succinate dehydrogenase (complex II, CII), ubiquinol-cytochrome c oxidoreductase (cytochrome b-c1 complex, complex III, CIII) and cytochrome c oxidase (complex IV, CIV), that cooperate to transfer electrons derived from NADH and succinate to molecular oxygen, creating an electrochemical gradient over the inner membrane that drives transmembrane transport and the ATP synthase. Cytochrome c oxidase is the component of the respiratory chain that catalyzes the reduction of oxygen to water. Electrons originating from reduced cytochrome c in the intermembrane space (IMS) are transferred via the dinuclear copper A center (CU(A)) of subunit 2 and heme A of subunit 1 to the active site in subunit 1, a binuclear center (BNC) formed by heme A3 and copper B (CU(B)). The BNC reduces molecular oxygen to 2 water molecules using 4 electrons from cytochrome c in the IMS and 4 protons from the mitochondrial matrix. This is Cytochrome c oxidase subunit 2 (MT-CO2) from Anisomys imitator (Uneven-toothed rat).